We begin with the raw amino-acid sequence, 91 residues long: Small ribosomal subunit protein uS19 (91 aa).

This sequence belongs to the universal ribosomal protein uS19 family.

Protein S19 forms a complex with S13 that binds strongly to the 16S ribosomal RNA. This is Small ribosomal subunit protein uS19 from Sulfurimonas denitrificans (strain ATCC 33889 / DSM 1251) (Thiomicrospira denitrificans (strain ATCC 33889 / DSM 1251)).